A 248-amino-acid chain; its full sequence is Probable transcriptional regulatory protein Ecaj_0351 (248 aa).

Positions 1–21 are disordered; sequence MAGHSQFANIKHRKGAQDAKR.

It belongs to the TACO1 family.

It is found in the cytoplasm. The sequence is that of Probable transcriptional regulatory protein Ecaj_0351 from Ehrlichia canis (strain Jake).